The sequence spans 91 residues: Probable Fe(2+)-trafficking protein (91 aa).

This sequence belongs to the Fe(2+)-trafficking protein family.

In terms of biological role, could be a mediator in iron transactions between iron acquisition and iron-requiring processes, such as synthesis and/or repair of Fe-S clusters in biosynthetic enzymes. This is Probable Fe(2+)-trafficking protein from Shewanella denitrificans (strain OS217 / ATCC BAA-1090 / DSM 15013).